The primary structure comprises 129 residues: Small ribosomal subunit protein uS11 (129 aa).

Belongs to the universal ribosomal protein uS11 family. In terms of assembly, part of the 30S ribosomal subunit. Interacts with proteins S7 and S18. Binds to IF-3.

Functionally, located on the platform of the 30S subunit, it bridges several disparate RNA helices of the 16S rRNA. Forms part of the Shine-Dalgarno cleft in the 70S ribosome. This is Small ribosomal subunit protein uS11 from Mannheimia succiniciproducens (strain KCTC 0769BP / MBEL55E).